A 211-amino-acid polypeptide reads, in one-letter code: Protein-L-isoaspartate O-methyltransferase (211 aa).

The active site involves serine 60.

This sequence belongs to the methyltransferase superfamily. L-isoaspartyl/D-aspartyl protein methyltransferase family.

Its subcellular location is the cytoplasm. It catalyses the reaction [protein]-L-isoaspartate + S-adenosyl-L-methionine = [protein]-L-isoaspartate alpha-methyl ester + S-adenosyl-L-homocysteine. Functionally, catalyzes the methyl esterification of L-isoaspartyl residues in peptides and proteins that result from spontaneous decomposition of normal L-aspartyl and L-asparaginyl residues. It plays a role in the repair and/or degradation of damaged proteins. The sequence is that of Protein-L-isoaspartate O-methyltransferase from Pseudomonas fluorescens (strain SBW25).